We begin with the raw amino-acid sequence, 283 residues long: Urease accessory protein UreD (283 aa).

The interval 1–20 (MTQTQPVGTLRLTIDDQGPQ) is disordered.

The protein belongs to the UreD family. UreD, UreF and UreG form a complex that acts as a GTP-hydrolysis-dependent molecular chaperone, activating the urease apoprotein by helping to assemble the nickel containing metallocenter of UreC. The UreE protein probably delivers the nickel.

The protein resides in the cytoplasm. Required for maturation of urease via the functional incorporation of the urease nickel metallocenter. The polypeptide is Urease accessory protein UreD (Corynebacterium glutamicum (strain R)).